A 1065-amino-acid chain; its full sequence is Isoleucine--tRNA ligase (1065 aa).

The 'HIGH' region motif lies at 49–59; sequence PYVSGAIHLGT. The 'KMSKS' region motif lies at 625–629; sequence KMSKS. K628 contacts ATP.

Belongs to the class-I aminoacyl-tRNA synthetase family. IleS type 2 subfamily. As to quaternary structure, monomer. Requires Zn(2+) as cofactor.

The protein localises to the cytoplasm. It carries out the reaction tRNA(Ile) + L-isoleucine + ATP = L-isoleucyl-tRNA(Ile) + AMP + diphosphate. Its function is as follows. Catalyzes the attachment of isoleucine to tRNA(Ile). As IleRS can inadvertently accommodate and process structurally similar amino acids such as valine, to avoid such errors it has two additional distinct tRNA(Ile)-dependent editing activities. One activity is designated as 'pretransfer' editing and involves the hydrolysis of activated Val-AMP. The other activity is designated 'posttransfer' editing and involves deacylation of mischarged Val-tRNA(Ile). The chain is Isoleucine--tRNA ligase from Thermococcus kodakarensis (strain ATCC BAA-918 / JCM 12380 / KOD1) (Pyrococcus kodakaraensis (strain KOD1)).